The chain runs to 421 residues: Gamma-glutamyl phosphate reductase (421 aa).

Belongs to the gamma-glutamyl phosphate reductase family.

Its subcellular location is the cytoplasm. The enzyme catalyses L-glutamate 5-semialdehyde + phosphate + NADP(+) = L-glutamyl 5-phosphate + NADPH + H(+). It functions in the pathway amino-acid biosynthesis; L-proline biosynthesis; L-glutamate 5-semialdehyde from L-glutamate: step 2/2. Catalyzes the NADPH-dependent reduction of L-glutamate 5-phosphate into L-glutamate 5-semialdehyde and phosphate. The product spontaneously undergoes cyclization to form 1-pyrroline-5-carboxylate. In Herminiimonas arsenicoxydans, this protein is Gamma-glutamyl phosphate reductase.